A 117-amino-acid chain; its full sequence is Immunoglobulin kappa variable 1-12 (117 aa).

Residues 1 to 22 form the signal peptide; sequence MDMRVPAQLLGLLLLWFPGSRC. The tract at residues 23–45 is framework-1; that stretch reads DIQMTQSPSSVSASVGDRVTITC. The Ig-like domain maps to 24 to 117; sequence IQMTQSPSSV…YYCQQANSFP (94 aa). C45 and C110 are joined by a disulfide. Positions 46 to 56 are complementarity-determining-1; the sequence is RASQGISSWLA. The framework-2 stretch occupies residues 57–71; it reads WYQQKPGKAPKLLIY. The segment at 72-78 is complementarity-determining-2; it reads AASSLQS. Positions 79 to 110 are framework-3; the sequence is GVPSRFSGSGSGTDFTLTISSLQPEDFATYYC. Positions 111 to 117 are complementarity-determining-3; it reads QQANSFP.

In terms of assembly, immunoglobulins are composed of two identical heavy chains and two identical light chains; disulfide-linked.

The protein resides in the secreted. It localises to the cell membrane. Functionally, v region of the variable domain of immunoglobulin light chains that participates in the antigen recognition. Immunoglobulins, also known as antibodies, are membrane-bound or secreted glycoproteins produced by B lymphocytes. In the recognition phase of humoral immunity, the membrane-bound immunoglobulins serve as receptors which, upon binding of a specific antigen, trigger the clonal expansion and differentiation of B lymphocytes into immunoglobulins-secreting plasma cells. Secreted immunoglobulins mediate the effector phase of humoral immunity, which results in the elimination of bound antigens. The antigen binding site is formed by the variable domain of one heavy chain, together with that of its associated light chain. Thus, each immunoglobulin has two antigen binding sites with remarkable affinity for a particular antigen. The variable domains are assembled by a process called V-(D)-J rearrangement and can then be subjected to somatic hypermutations which, after exposure to antigen and selection, allow affinity maturation for a particular antigen. This chain is Immunoglobulin kappa variable 1-12, found in Homo sapiens (Human).